The sequence spans 398 residues: Cap-specific mRNA (nucleoside-2'-O-)-methyltransferase 1 (398 aa).

The 214-residue stretch at 85–298 folds into the RrmJ-type SAM-dependent 2'-O-MTase domain; that stretch reads QFSNRAGHKL…ERYLVCVDFL (214 aa). G132 and D211 together coordinate S-adenosyl-L-methionine. K252 serves as the catalytic Proton acceptor. The segment at 371–398 is disordered; sequence LKAKETTTRTSAESDDSPLSSRESCKDG.

The enzyme catalyses a 5'-end (N(7)-methyl 5'-triphosphoguanosine)-ribonucleoside in mRNA + S-adenosyl-L-methionine = a 5'-end (N(7)-methyl 5'-triphosphoguanosine)-(2'-O-methyl-ribonucleoside) in mRNA + S-adenosyl-L-homocysteine + H(+). Functionally, S-adenosyl-L-methionine-dependent methyltransferase that mediates RNA cap1 2'-O-ribose methylation to the 5'-cap structure of RNAs. Methylates the ribose of the first nucleotide of a m(7)GpppG-capped mRNA to produce m(7)GpppNmp (cap1). The polypeptide is Cap-specific mRNA (nucleoside-2'-O-)-methyltransferase 1 (Leishmania braziliensis).